The sequence spans 336 residues: Cell division protein ZipA (336 aa).

The Periplasmic segment spans residues 1-2 (ME). Residues 3 to 23 (LHILFFILAGLLIAVLIGFSL) form a helical membrane-spanning segment. Topologically, residues 24-336 (WSARREKSRI…SRQAYLARVS (313 aa)) are cytoplasmic.

It belongs to the ZipA family. As to quaternary structure, interacts with FtsZ via their C-terminal domains.

Its subcellular location is the cell inner membrane. In terms of biological role, essential cell division protein that stabilizes the FtsZ protofilaments by cross-linking them and that serves as a cytoplasmic membrane anchor for the Z ring. Also required for the recruitment to the septal ring of downstream cell division proteins. In Actinobacillus pleuropneumoniae serotype 5b (strain L20), this protein is Cell division protein ZipA.